The chain runs to 224 residues: Ribose-5-phosphate isomerase A (224 aa).

Substrate-binding positions include 32-35, 85-88, and 98-101; these read TGST, DGAD, and KGGG. The active-site Proton acceptor is Glu-107. Residue Lys-125 coordinates substrate.

It belongs to the ribose 5-phosphate isomerase family. As to quaternary structure, homodimer.

The enzyme catalyses aldehydo-D-ribose 5-phosphate = D-ribulose 5-phosphate. The protein operates within carbohydrate degradation; pentose phosphate pathway; D-ribose 5-phosphate from D-ribulose 5-phosphate (non-oxidative stage): step 1/1. Its function is as follows. Catalyzes the reversible conversion of ribose-5-phosphate to ribulose 5-phosphate. The chain is Ribose-5-phosphate isomerase A from Pseudomonas putida (strain ATCC 700007 / DSM 6899 / JCM 31910 / BCRC 17059 / LMG 24140 / F1).